Here is a 311-residue protein sequence, read N- to C-terminus: MSNYLDFEKSIKQIDEDIANAKIRGDEHAVEILNKNLSKEISKVYKNLNEYQRLQLARHPDRPYAIDYINSFLVDGYEVHGDRAFRDDPAIVCYIGYIGGKKTVVIGEQKGRGTKNKLKRNFGMPHPEGYRKALRVAKLAEKFNLPILFLIDTPGAYPGVGAEERGQSEAIARNLFEFANLKTPIIAVVIGEGGSGGALAIGVADRLAMMKNSVFSVISPEGCAAILWNDPTKQEQATKSMKITADDLKNLSLIDDVINEPINGAHRDKDGAAKALANYFISELAELEKLDINELVAKRIDKVLSIGAYEE.

A CoA carboxyltransferase C-terminal domain is found at 36–286 (NLSKEISKVY…ANYFISELAE (251 aa)).

Belongs to the AccA family. In terms of assembly, acetyl-CoA carboxylase is a heterohexamer composed of biotin carboxyl carrier protein (AccB), biotin carboxylase (AccC) and two subunits each of ACCase subunit alpha (AccA) and ACCase subunit beta (AccD).

It localises to the cytoplasm. The catalysed reaction is N(6)-carboxybiotinyl-L-lysyl-[protein] + acetyl-CoA = N(6)-biotinyl-L-lysyl-[protein] + malonyl-CoA. It functions in the pathway lipid metabolism; malonyl-CoA biosynthesis; malonyl-CoA from acetyl-CoA: step 1/1. Component of the acetyl coenzyme A carboxylase (ACC) complex. First, biotin carboxylase catalyzes the carboxylation of biotin on its carrier protein (BCCP) and then the CO(2) group is transferred by the carboxyltransferase to acetyl-CoA to form malonyl-CoA. The polypeptide is Acetyl-coenzyme A carboxylase carboxyl transferase subunit alpha (Campylobacter concisus (strain 13826)).